A 478-amino-acid chain; its full sequence is MNSLMNDDMVKIIRNGLSASQHPKHILVIGAGLSGLVSASLLKNAGHRVTILEASGRAGGRVCTLRSPFSDDLYFNAGPMRIPNNHSLTLEYIKKFKLPTNVFINRTPMDIIYANGIKTRLQVFERAPGILRYPVAPNEQGKTSEELMLSLLQPILNFINQNPARNWRIVEEQYKNHSLSSFLNTYFSYGAIDMIGVLLDMEAYMGMSLVEVLRESIFFSSPAHFYEITGGMDLLPHAFLPQLKTNILYHQKMMKMSQGENRVTIHCQHQQTAEFTSFTADLAIVTIPFSTLRFVKVEPYHSFSYYKRRAIRELNYISATKIGIEFKSRFWEKAGQHGGKSITDLPIRFSYYPSRNIGANGHAVILASYTWADEALIWDSLSEGERIQYTLLNLSEIYGDIVWSEFVSGTSFSWSQYPYSAGGFTAFEPGQELELYPYIPVPEGRVHFAGEHASLTHAWMQGAIESGIRVAYEVNRLP.

FAD is bound by residues serine 34, glutamate 53, arginine 61, and 80–81; that span reads MR. Arginine 81 and tyrosine 369 together coordinate substrate. FAD contacts are provided by residues glutamate 451 and 460–463; that span reads MQGA.

It belongs to the flavin monoamine oxidase family. FIG1 subfamily. FAD is required as a cofactor.

The catalysed reaction is an L-alpha-amino acid + O2 + H2O = a 2-oxocarboxylate + H2O2 + NH4(+). This Bacillus subtilis (strain 168) protein is Putative L-amino-acid oxidase YobN (yobN).